Reading from the N-terminus, the 184-residue chain is ATP-dependent protease subunit HslV (184 aa).

Residue Thr12 is part of the active site. Na(+)-binding residues include Ala167, Cys170, and Thr173.

Belongs to the peptidase T1B family. HslV subfamily. A double ring-shaped homohexamer of HslV is capped on each side by a ring-shaped HslU homohexamer. The assembly of the HslU/HslV complex is dependent on binding of ATP.

Its subcellular location is the cytoplasm. It catalyses the reaction ATP-dependent cleavage of peptide bonds with broad specificity.. With respect to regulation, allosterically activated by HslU binding. Its function is as follows. Protease subunit of a proteasome-like degradation complex believed to be a general protein degrading machinery. This chain is ATP-dependent protease subunit HslV, found in Wolbachia pipientis subsp. Culex pipiens (strain wPip).